Reading from the N-terminus, the 77-residue chain is Small ribosomal subunit protein bS16 (77 aa).

This sequence belongs to the bacterial ribosomal protein bS16 family.

The sequence is that of Small ribosomal subunit protein bS16 from Helicobacter hepaticus (strain ATCC 51449 / 3B1).